Reading from the N-terminus, the 133-residue chain is Phosphoribosyl-AMP cyclohydrolase (133 aa).

Asp77 contributes to the Mg(2+) binding site. Cys78 is a binding site for Zn(2+). Positions 79 and 81 each coordinate Mg(2+). Residues Cys95 and Cys102 each coordinate Zn(2+).

Belongs to the PRA-CH family. Homodimer. Mg(2+) is required as a cofactor. The cofactor is Zn(2+).

It localises to the cytoplasm. The catalysed reaction is 1-(5-phospho-beta-D-ribosyl)-5'-AMP + H2O = 1-(5-phospho-beta-D-ribosyl)-5-[(5-phospho-beta-D-ribosylamino)methylideneamino]imidazole-4-carboxamide. Its pathway is amino-acid biosynthesis; L-histidine biosynthesis; L-histidine from 5-phospho-alpha-D-ribose 1-diphosphate: step 3/9. Catalyzes the hydrolysis of the adenine ring of phosphoribosyl-AMP. The chain is Phosphoribosyl-AMP cyclohydrolase from Thiobacillus denitrificans (strain ATCC 25259 / T1).